Here is a 1026-residue protein sequence, read N- to C-terminus: Beta-galactosidase (1026 aa).

Catalysis depends on glutamate 458, which acts as the Proton donor. The active-site Nucleophile is the glutamate 546.

The protein belongs to the glycosyl hydrolase 2 family.

The catalysed reaction is Hydrolysis of terminal non-reducing beta-D-galactose residues in beta-D-galactosides.. The polypeptide is Beta-galactosidase (lacZ) (Streptococcus thermophilus).